A 74-amino-acid polypeptide reads, in one-letter code: Amphipathic peptide CT1 (74 aa).

The N-terminal stretch at Met-1–Gly-23 is a signal peptide. Val-37 is modified (valine amide). Residues Gly-41–Arg-74 constitute a propeptide that is removed on maturation.

Belongs to the non-disulfide-bridged peptide (NDBP) superfamily. Short antimicrobial peptide (group 4) family. As to expression, expressed by the venom gland.

The protein localises to the secreted. The protein resides in the target cell membrane. Its function is as follows. Antimicrobial peptide that is rapidly bactericidal against Gram-positive bacteria (MIC=12.5 ug/ml against S.aureus, and MIC=100 ug/ml against M.luteus). Is also active against clinical antibiotics-resistant bacterial strains. This chain is Amphipathic peptide CT1, found in Scorpiops tibetanus (Scorpion).